The sequence spans 108 residues: Ig kappa chain V-V region EPC 109 (108 aa).

Residues 1–23 (DVQMIQSPSSLSASLGDIVTMTC) form a framework-1 region. Cys-23 and Cys-88 form a disulfide bridge. The interval 24-34 (QASQGTNINLN) is complementarity-determining-1. The tract at residues 35-49 (WFQQKPGKAPKLLIY) is framework-2. The complementarity-determining-2 stretch occupies residues 50–56 (GASILEA). The framework-3 stretch occupies residues 57-88 (GVPSRFSGRRYGTDFTLTISSLEDEDMATYFC). The complementarity-determining-3 stretch occupies residues 89-97 (LQHSYLPYT). Positions 98 to 108 (FGGGTKLEKKR) are framework-4.

The sequence is that of Ig kappa chain V-V region EPC 109 from Mus musculus (Mouse).